The primary structure comprises 47 residues: uncharacterized protein (47 aa).

An N-terminal signal peptide occupies residues methionine 1–alanine 18. The disordered stretch occupies residues glutamate 28–glutamine 47.

This is an uncharacterized protein from Haemophilus influenzae (strain ATCC 51907 / DSM 11121 / KW20 / Rd).